The following is a 406-amino-acid chain: S-adenosylmethionine synthase (406 aa).

His16 lines the ATP pocket. Asp18 contributes to the Mg(2+) binding site. A K(+)-binding site is contributed by Glu44. L-methionine contacts are provided by Glu57 and Gln100. Residues 100-110 (QSVDIAQGVDR) are flexible loop. ATP is bound by residues 165–167 (DAK), Asp241, 247–248 (RK), Ala264, and Lys268. Asp241 contacts L-methionine. Residue Lys272 participates in L-methionine binding.

The protein belongs to the AdoMet synthase family. As to quaternary structure, homotetramer; dimer of dimers. The cofactor is Mg(2+). Requires K(+) as cofactor.

Its subcellular location is the cytoplasm. It carries out the reaction L-methionine + ATP + H2O = S-adenosyl-L-methionine + phosphate + diphosphate. The protein operates within amino-acid biosynthesis; S-adenosyl-L-methionine biosynthesis; S-adenosyl-L-methionine from L-methionine: step 1/1. In terms of biological role, catalyzes the formation of S-adenosylmethionine (AdoMet) from methionine and ATP. The overall synthetic reaction is composed of two sequential steps, AdoMet formation and the subsequent tripolyphosphate hydrolysis which occurs prior to release of AdoMet from the enzyme. The chain is S-adenosylmethionine synthase from Chromohalobacter salexigens (strain ATCC BAA-138 / DSM 3043 / CIP 106854 / NCIMB 13768 / 1H11).